Consider the following 337-residue polypeptide: MALEMFYDDDADLSIIQGRKVGVIGYGSQGHAHSLSLRDSGVQVRVGLKQGSRSRPKVEEQGLDVDTPAEVAKWADVVMVLAPDTAQAEIFAGDIEPNLKPGDALFFGHGLNVHFGLIKPPADVAVAMVAPKGPGHLVRRQFVDGKGVPCLVAVEQDPRGDGLALALSYAKAIGGTRAGVIKTTFKDETETDLFGEQTVLCGGTEELVKAGFEVMVEAGYPAELAYFEVLHELKLIVDLMYEGGLARMYYSVSDTAEFGGYLSGPRVIDAGTKERMRDILREIQDGSFVHKLVADVEGGNKQLEELRRQNAEHPIEVVGKKLRDLMSWVDRPITETA.

A KARI N-terminal Rossmann domain is found at 3 to 183 (LEMFYDDDAD…GGTRAGVIKT (181 aa)). Residues 26–29 (YGSQ), Lys-49, Ser-52, Ser-54, and 84–87 (DTAQ) each bind NADP(+). Residue His-109 is part of the active site. Residue Gly-135 participates in NADP(+) binding. One can recognise a KARI C-terminal knotted domain in the interval 184–329 (TFKDETETDL…KKLRDLMSWV (146 aa)). Mg(2+) is bound by residues Asp-192, Glu-196, Glu-228, and Glu-232. Ser-253 provides a ligand contact to substrate.

The protein belongs to the ketol-acid reductoisomerase family. Mg(2+) serves as cofactor.

It carries out the reaction (2R)-2,3-dihydroxy-3-methylbutanoate + NADP(+) = (2S)-2-acetolactate + NADPH + H(+). The catalysed reaction is (2R,3R)-2,3-dihydroxy-3-methylpentanoate + NADP(+) = (S)-2-ethyl-2-hydroxy-3-oxobutanoate + NADPH + H(+). It functions in the pathway amino-acid biosynthesis; L-isoleucine biosynthesis; L-isoleucine from 2-oxobutanoate: step 2/4. Its pathway is amino-acid biosynthesis; L-valine biosynthesis; L-valine from pyruvate: step 2/4. Functionally, involved in the biosynthesis of branched-chain amino acids (BCAA). Catalyzes an alkyl-migration followed by a ketol-acid reduction of (S)-2-acetolactate (S2AL) to yield (R)-2,3-dihydroxy-isovalerate. In the isomerase reaction, S2AL is rearranged via a Mg-dependent methyl migration to produce 3-hydroxy-3-methyl-2-ketobutyrate (HMKB). In the reductase reaction, this 2-ketoacid undergoes a metal-dependent reduction by NADPH to yield (R)-2,3-dihydroxy-isovalerate. The chain is Ketol-acid reductoisomerase (NADP(+)) from Mycobacterium bovis (strain BCG / Pasteur 1173P2).